The primary structure comprises 239 residues: Ribosomal RNA small subunit methyltransferase G (239 aa).

S-adenosyl-L-methionine contacts are provided by residues glycine 80, phenylalanine 85, 103–105, 131–132, and arginine 150; these read EAS and AE.

This sequence belongs to the methyltransferase superfamily. RNA methyltransferase RsmG family.

Its subcellular location is the cytoplasm. In terms of biological role, specifically methylates the N7 position of a guanine in 16S rRNA. This chain is Ribosomal RNA small subunit methyltransferase G, found in Caldanaerobacter subterraneus subsp. tengcongensis (strain DSM 15242 / JCM 11007 / NBRC 100824 / MB4) (Thermoanaerobacter tengcongensis).